The following is a 523-amino-acid chain: Bifunctional purine biosynthesis protein PurH (523 aa).

The MGS-like domain occupies Met-1–Thr-150.

It belongs to the PurH family.

It catalyses the reaction (6R)-10-formyltetrahydrofolate + 5-amino-1-(5-phospho-beta-D-ribosyl)imidazole-4-carboxamide = 5-formamido-1-(5-phospho-D-ribosyl)imidazole-4-carboxamide + (6S)-5,6,7,8-tetrahydrofolate. The catalysed reaction is IMP + H2O = 5-formamido-1-(5-phospho-D-ribosyl)imidazole-4-carboxamide. It participates in purine metabolism; IMP biosynthesis via de novo pathway; 5-formamido-1-(5-phospho-D-ribosyl)imidazole-4-carboxamide from 5-amino-1-(5-phospho-D-ribosyl)imidazole-4-carboxamide (10-formyl THF route): step 1/1. It functions in the pathway purine metabolism; IMP biosynthesis via de novo pathway; IMP from 5-formamido-1-(5-phospho-D-ribosyl)imidazole-4-carboxamide: step 1/1. In Rhodopirellula baltica (strain DSM 10527 / NCIMB 13988 / SH1), this protein is Bifunctional purine biosynthesis protein PurH.